The chain runs to 249 residues: Galactan endo-beta-1,3-galactanase (249 aa).

The N-terminal stretch at Met-1–Ala-21 is a signal peptide. Residues Ser-34 to Thr-247 form the GH16 domain. Asn-48 carries an N-linked (GlcNAc...) asparagine glycan. Residue Glu-138 is the Nucleophile of the active site. Catalysis depends on Glu-143, which acts as the Proton donor. Asn-156 carries an N-linked (GlcNAc...) asparagine glycan.

Belongs to the glycosyl hydrolase 16 family. Post-translationally, N-glycosylated.

The enzyme catalyses The enzyme specifically hydrolyzes beta-1,3-galactan and beta-1,3-galactooligosaccharides.. Its function is as follows. Specifically hydrolyzes beta-1,3-galactan in an endo-fashion. Requires at least 3 contiguous beta-1,3-residues. The chain is Galactan endo-beta-1,3-galactanase (EN3GAL) from Flammulina velutipes (Agaricus velutipes).